The primary structure comprises 489 residues: UDP-N-acetylmuramate--L-alanine ligase (489 aa).

Residue 128–134 coordinates ATP; it reads GTHGKTT.

The protein belongs to the MurCDEF family.

The protein resides in the cytoplasm. The catalysed reaction is UDP-N-acetyl-alpha-D-muramate + L-alanine + ATP = UDP-N-acetyl-alpha-D-muramoyl-L-alanine + ADP + phosphate + H(+). It participates in cell wall biogenesis; peptidoglycan biosynthesis. Cell wall formation. In Shewanella woodyi (strain ATCC 51908 / MS32), this protein is UDP-N-acetylmuramate--L-alanine ligase.